The chain runs to 75 residues: RNA-binding protein Hfq (75 aa).

Positions Asp9–Ile69 constitute a Sm domain.

It belongs to the Hfq family. Homohexamer.

RNA chaperone that binds small regulatory RNA (sRNAs) and mRNAs to facilitate mRNA translational regulation in response to envelope stress, environmental stress and changes in metabolite concentrations. Also binds with high specificity to tRNAs. The protein is RNA-binding protein Hfq of Geobacillus kaustophilus (strain HTA426).